The primary structure comprises 189 residues: Ion-translocating oxidoreductase complex subunit B (189 aa).

The segment at 1–26 (MSGIFIAIILLTILALLFGILLGFAA) is hydrophobic. Residues 32 to 90 (EGDPLVDQLEALLPQTQCGQCGYPGCRPYAEAIANGEKINLCPPGGSATMEKLAEMAGV) enclose the 4Fe-4S domain. C49, C52, C57, C73, C114, C117, C120, C124, C144, C147, C150, and C154 together coordinate [4Fe-4S] cluster. 4Fe-4S ferredoxin-type domains lie at 105 to 134 (KVAY…GSGK) and 135 to 164 (LMHT…MLPV).

Belongs to the 4Fe4S bacterial-type ferredoxin family. RnfB subfamily. As to quaternary structure, the complex is composed of six subunits: RnfA, RnfB, RnfC, RnfD, RnfE and RnfG. The cofactor is [4Fe-4S] cluster.

The protein resides in the cell inner membrane. Its function is as follows. Part of a membrane-bound complex that couples electron transfer with translocation of ions across the membrane. This Shewanella sediminis (strain HAW-EB3) protein is Ion-translocating oxidoreductase complex subunit B.